Reading from the N-terminus, the 518-residue chain is Serine--tRNA ligase, mitochondrial (518 aa).

A mitochondrion-targeting transit peptide spans 1–34 (MAASIVRRLGPLVAGRGLRLRGGCVCNQSFKRSF). K110 carries the post-translational modification N6-acetyllysine. At K195 the chain carries N6-succinyllysine. 299–301 (TAE) contacts L-serine. Residue 330 to 332 (RAE) coordinates ATP. The residue at position 337 (K337) is an N6-succinyllysine. ATP is bound at residue V345. Residue E352 participates in L-serine binding. 418 to 421 (EVTS) is an ATP binding site. T453 contacts L-serine. A disordered region spans residues 497–518 (PLQYIGPNQPQKPRLPGQPASS).

Belongs to the class-II aminoacyl-tRNA synthetase family. Type-1 seryl-tRNA synthetase subfamily. As to quaternary structure, homodimer. The tRNA molecule probably binds across the dimer. Two N-termini starting at positions 35 and 37 have been identified by direct sequencing.

The protein resides in the mitochondrion matrix. The enzyme catalyses tRNA(Ser) + L-serine + ATP = L-seryl-tRNA(Ser) + AMP + diphosphate + H(+). The catalysed reaction is tRNA(Sec) + L-serine + ATP = L-seryl-tRNA(Sec) + AMP + diphosphate + H(+). The protein operates within aminoacyl-tRNA biosynthesis; selenocysteinyl-tRNA(Sec) biosynthesis; L-seryl-tRNA(Sec) from L-serine and tRNA(Sec): step 1/1. Catalyzes the attachment of serine to tRNA(Ser). Is also probably able to aminoacylate tRNA(Sec) with serine, to form the misacylated tRNA L-seryl-tRNA(Sec), which will be further converted into selenocysteinyl-tRNA(Sec). The chain is Serine--tRNA ligase, mitochondrial (SARS2) from Bos taurus (Bovine).